The chain runs to 335 residues: 2-acylglycerol O-acyltransferase 1 (335 aa).

The next 2 membrane-spanning stretches (helical) occupy residues 24 to 44 (WVFSFLLLAQCCIGIFLSLVL) and 47 to 67 (LWLILALYVLWLYLDWETPQA). Asn77, Asn125, and Asn180 each carry an N-linked (GlcNAc...) asparagine glycan.

Belongs to the diacylglycerol acyltransferase family.

It localises to the endoplasmic reticulum membrane. It carries out the reaction a 2-acylglycerol + an acyl-CoA = a 1,2-diacylglycerol + CoA. The catalysed reaction is a 2-acylglycerol + an acyl-CoA = a 1,2-diacyl-sn-glycerol + CoA. The enzyme catalyses a 2-acylglycerol + an acyl-CoA = a 2,3-diacyl-sn-glycerol + CoA. It catalyses the reaction a 1-acylglycerol + an acyl-CoA = a 1,2-diacylglycerol + CoA. It carries out the reaction a 1-acylglycerol + an acyl-CoA = a 1,3-diacylglycerol + CoA. The catalysed reaction is a 1-acyl-sn-glycerol + an acyl-CoA = a 1,3-diacyl-sn-glycerol + CoA. The enzyme catalyses a 3-acyl-sn-glycerol + an acyl-CoA = a 1,3-diacyl-sn-glycerol + CoA. The protein operates within glycerolipid metabolism; triacylglycerol biosynthesis. Involved in glycerolipid synthesis and lipid metabolism. Catalyzes the formation of diacylglycerol, the precursor of triacylglycerol, by transferring the acyl chain of a fatty acyl-CoA to a monoacylglycerol, mainly at the sn-1 or sn-3 positions. It uses both sn-2-monoacylglycerol (2-acylglycerol) and sn-1-monoacylglycerol (1-acyl-sn-glycerol) equally well as substrates, and uses sn-3-monoacylglycerol (3-acyl-sn-glycerol) with lower efficiency. The polypeptide is 2-acylglycerol O-acyltransferase 1 (mogat1) (Xenopus tropicalis (Western clawed frog)).